Reading from the N-terminus, the 481-residue chain is ATP synthase subunit beta (481 aa).

Gly160–Thr167 contributes to the ATP binding site.

It belongs to the ATPase alpha/beta chains family. As to quaternary structure, F-type ATPases have 2 components, CF(1) - the catalytic core - and CF(0) - the membrane proton channel. CF(1) has five subunits: alpha(3), beta(3), gamma(1), delta(1), epsilon(1). CF(0) has three main subunits: a(1), b(2) and c(9-12). The alpha and beta chains form an alternating ring which encloses part of the gamma chain. CF(1) is attached to CF(0) by a central stalk formed by the gamma and epsilon chains, while a peripheral stalk is formed by the delta and b chains.

The protein resides in the cell inner membrane. It carries out the reaction ATP + H2O + 4 H(+)(in) = ADP + phosphate + 5 H(+)(out). In terms of biological role, produces ATP from ADP in the presence of a proton gradient across the membrane. The catalytic sites are hosted primarily by the beta subunits. This is ATP synthase subunit beta from Stigmatella aurantiaca.